The primary structure comprises 279 residues: Probable endonuclease 4 (279 aa).

Zn(2+)-binding residues include histidine 68, histidine 108, glutamate 143, aspartate 177, histidine 180, histidine 214, aspartate 227, histidine 229, and glutamate 259.

This sequence belongs to the AP endonuclease 2 family. Zn(2+) is required as a cofactor.

The catalysed reaction is Endonucleolytic cleavage to 5'-phosphooligonucleotide end-products.. Functionally, endonuclease IV plays a role in DNA repair. It cleaves phosphodiester bonds at apurinic or apyrimidinic (AP) sites, generating a 3'-hydroxyl group and a 5'-terminal sugar phosphate. This Nitrosopumilus maritimus (strain SCM1) protein is Probable endonuclease 4.